Consider the following 252-residue polypeptide: Trypsin iota (252 aa).

Positions 1 to 19 (MAVYGIVATVLVLLLLGDA) are cleaved as a signal peptide. A propeptide spans 20–27 (SDVEATGR) (activation peptide). The 223-residue stretch at 28–250 (IIGGSDQLIR…LRPWIVKAAN (223 aa)) folds into the Peptidase S1 domain. Cysteines 53 and 69 form a disulfide. Active-site charge relay system residues include histidine 68 and aspartate 113. 2 disulfides stabilise this stretch: cysteine 175-cysteine 193 and cysteine 202-cysteine 226. Serine 206 functions as the Charge relay system in the catalytic mechanism.

Belongs to the peptidase S1 family.

It localises to the secreted. The protein localises to the extracellular space. The enzyme catalyses Preferential cleavage: Arg-|-Xaa, Lys-|-Xaa.. In Drosophila melanogaster (Fruit fly), this protein is Trypsin iota (iotaTry).